A 350-amino-acid chain; its full sequence is Methylthioribose-1-phosphate isomerase (350 aa).

Residues 47 to 49, Arg-89, and Gln-196 each bind substrate; that span reads RGA. The Proton donor role is filled by Asp-237. Substrate is bound at residue 247–248; it reads NK.

The protein belongs to the eIF-2B alpha/beta/delta subunits family. MtnA subfamily.

It carries out the reaction 5-(methylsulfanyl)-alpha-D-ribose 1-phosphate = 5-(methylsulfanyl)-D-ribulose 1-phosphate. It functions in the pathway amino-acid biosynthesis; L-methionine biosynthesis via salvage pathway; L-methionine from S-methyl-5-thio-alpha-D-ribose 1-phosphate: step 1/6. Catalyzes the interconversion of methylthioribose-1-phosphate (MTR-1-P) into methylthioribulose-1-phosphate (MTRu-1-P). This Nitratidesulfovibrio vulgaris (strain DSM 19637 / Miyazaki F) (Desulfovibrio vulgaris) protein is Methylthioribose-1-phosphate isomerase.